A 206-amino-acid polypeptide reads, in one-letter code: Thymidylate kinase (206 aa).

10-17 (GIDGAGKS) contributes to the ATP binding site.

It belongs to the thymidylate kinase family.

The enzyme catalyses dTMP + ATP = dTDP + ADP. In terms of biological role, phosphorylation of dTMP to form dTDP in both de novo and salvage pathways of dTTP synthesis. The polypeptide is Thymidylate kinase (tmk) (Neisseria meningitidis serogroup B (strain ATCC BAA-335 / MC58)).